We begin with the raw amino-acid sequence, 464 residues long: Gasdermin-A3 (464 aa).

The segment at 1 to 261 (MPVFEDVTRA…EEPEEEKLIG (261 aa)) is triggers pyroptosis. 9–13 (RALVR) serves as a coordination point for a cardiolipin. Beta stranded transmembrane passes span 78–95 (NFSF…LVEV), 99–120 (VKVK…TLSV), 164–180 (VTVE…SLPS), and 184–198 (LGLQ…AVTI). Residues 255–327 (EEEKLIGEMH…DKGQKVTLEA (73 aa)) are a coiled coil.

Belongs to the gasdermin family. In terms of assembly, homooligomer; homooligomeric ring-shaped pore complex containing 18-36 subunits when inserted in the membrane. In terms of processing, cleavage relieves autoinhibition by releasing the N-terminal moiety (Gasdermin-A3, N-terminal) that initiates pyroptosis. In contrast to Gsdma, not cleaved by bacterial effector protein SpeB. Post-translationally, palmitoylated. Highest levels in skin with weak expression in placenta and testis. Not detected in the gastrointestinal tract. In skin, expressed in postnatal hair follicles and epidermis as well as sebaceous gland basal cells.

Its subcellular location is the cytoplasm. It localises to the cytosol. The protein localises to the cell membrane. The protein resides in the mitochondrion membrane. Its activity is regulated as follows. The full-length protein before cleavage is inactive: intramolecular interactions between N- and C-terminal domains mediate autoinhibition in the absence of activation signal. The intrinsic pyroptosis-inducing activity is carried by the released N-terminal moiety (Gasdermin-A3, N-terminal). Precursor of a pore-forming protein involved in the transition from catagen to telogen at the end of hair follicle morphogenesis. This form constitutes the precursor of the pore: upon cleavage, the released N-terminal moiety (Gasdermin-A3, N-terminal) binds to membranes and forms pores, triggering pyroptosis. This form acts as a sensor of infection: activation is triggered by cleavage by some bacterial effector protein, which releases the N-terminal moiety (Gasdermin-A3, N-terminal). Functionally, pore-forming protein that causes membrane permeabilization and pyroptosis. Released upon cleavage by some bacterial effector protein, and binds to membrane inner leaflet lipids. Homooligomerizes within the membrane and forms pores of 10-15 nanometers (nm) of inner diameter, allowing the release of mature interleukin-1 (IL1B and IL18) and triggering pyroptosis. Binds to membrane inner leaflet lipids, including bisphosphorylated phosphatidylinositols, such as phosphatidylinositol (4,5)-bisphosphate, as well as phosphatidylinositol (3,4,5)-bisphosphate, and more weakly to monophosphorylated phosphatidylinositols. Also binds to bacterial and mitochondrial lipids, including cardiolipin, and exhibits bactericidal activity. Plays a role in the transition from catagen to telogen at the end of hair follicle morphogenesis, possibly by regulating hair follicle stem cell niche maintenance. Also required for mammary gland development. In Mus musculus (Mouse), this protein is Gasdermin-A3.